Consider the following 255-residue polypeptide: Enolase-phosphatase E1 (255 aa).

The Mg(2+) site is built by aspartate 22 and glutamate 24. Substrate-binding positions include 136–137 (SS) and lysine 173. Aspartate 199 contacts Mg(2+).

This sequence belongs to the HAD-like hydrolase superfamily. MasA/MtnC family. Monomer. It depends on Mg(2+) as a cofactor.

The protein localises to the cytoplasm. The protein resides in the nucleus. It catalyses the reaction 5-methylsulfanyl-2,3-dioxopentyl phosphate + H2O = 1,2-dihydroxy-5-(methylsulfanyl)pent-1-en-3-one + phosphate. The protein operates within amino-acid biosynthesis; L-methionine biosynthesis via salvage pathway; L-methionine from S-methyl-5-thio-alpha-D-ribose 1-phosphate: step 3/6. It functions in the pathway amino-acid biosynthesis; L-methionine biosynthesis via salvage pathway; L-methionine from S-methyl-5-thio-alpha-D-ribose 1-phosphate: step 4/6. Bifunctional enzyme that catalyzes the enolization of 2,3-diketo-5-methylthiopentyl-1-phosphate (DK-MTP-1-P) into the intermediate 2-hydroxy-3-keto-5-methylthiopentenyl-1-phosphate (HK-MTPenyl-1-P), which is then dephosphorylated to form the acireductone 1,2-dihydroxy-3-keto-5-methylthiopentene (DHK-MTPene). The polypeptide is Enolase-phosphatase E1 (Verticillium alfalfae (strain VaMs.102 / ATCC MYA-4576 / FGSC 10136) (Verticillium wilt of alfalfa)).